Here is a 347-residue protein sequence, read N- to C-terminus: Dihydroorotase (347 aa).

Residues His-14 and His-16 each coordinate Zn(2+). Residues His-16 to Arg-18 and Asn-42 each bind substrate. Zn(2+) contacts are provided by Lys-100, His-137, and His-175. N6-carboxylysine is present on Lys-100. His-137 lines the substrate pocket. Leu-220 contacts substrate. Asp-248 contributes to the Zn(2+) binding site. Asp-248 is a catalytic residue. 2 residues coordinate substrate: His-252 and Ala-264.

Belongs to the metallo-dependent hydrolases superfamily. DHOase family. Class II DHOase subfamily. As to quaternary structure, homodimer. Zn(2+) serves as cofactor.

The catalysed reaction is (S)-dihydroorotate + H2O = N-carbamoyl-L-aspartate + H(+). Its pathway is pyrimidine metabolism; UMP biosynthesis via de novo pathway; (S)-dihydroorotate from bicarbonate: step 3/3. Functionally, catalyzes the reversible cyclization of carbamoyl aspartate to dihydroorotate. The protein is Dihydroorotase of Pseudomonas syringae pv. syringae (strain B728a).